Consider the following 755-residue polypeptide: Ribosome biogenesis protein BOP1 (755 aa).

2 stretches are compositionally biased toward polar residues: residues 1–10 (MSQEPSSSFS) and 43–61 (ELSSSSDNGDQGQPLTEPN). The disordered stretch occupies residues 1–65 (MSQEPSSSFS…PLTEPNNIPI (65 aa)). Residues 309-754 (MDSMLPTLPN…SGTDGVLRLF (446 aa)) are interaction with EB1. The stretch at 335–374 (TGTRRINGLTFSPKGMFFAVGGRDCILRVFETYSGRQVRA) is one WD 1 repeat. A disordered region spans residues 482–505 (YNEGSEDDDAAESARFNEERHQRG). Positions 496 to 505 (RFNEERHQRG) are enriched in basic and acidic residues. WD repeat units follow at residues 617-655 (PGVKQVTASGMGYGDNFITGSADSQCALFANAAGPEPTA), 659-698 (YHTSTIRNIDVHPCGGLVATCSDDGIVQISRIVDASLVKM), and 725-755 (DGSVGISRVTWHPRQPWLLCSGTDGVLRLFK).

It belongs to the WD repeat BOP1/ERB1 family. In terms of assembly, interacts (via C-terminal WD repeats) with giardin subunit beta. Interacts (via C-terminal WD repeats) with EB1.

The protein resides in the nucleus. The protein localises to the nucleolus. It localises to the nucleus membrane. Required for maturation of ribosomal RNAs and formation of the large ribosomal subunit. The protein is Ribosome biogenesis protein BOP1 of Giardia intestinalis (Giardia lamblia).